Reading from the N-terminus, the 1487-residue chain is Golgin subfamily A member 3 (1487 aa).

Residue Met1 is modified to N-acetylmethionine. Residues 1 to 118 (MDGASAKQDG…GTSAEGSVRK (118 aa)) form a disordered region. 2 positions are modified to phosphoserine: Ser18 and Ser60. Residues 62 to 74 (DRSSQVAICQNGQ) show a composition bias toward polar residues. Residues 121–141 (LQSLRLSLPMQETQLCSTASS) form an interaction with GOPC region. A golgi-targeting domain region spans residues 172–257 (ERSSQPATKM…DYRTEDPSDS (86 aa)). Disordered regions lie at residues 221-321 (PKVG…SSLS) and 365-394 (AAQH…SMES). 3 stretches are compositionally biased toward low complexity: residues 269–288 (SSLK…SPSS), 312–321 (SDSSSHSSLS), and 365–375 (AAQHQDQNQEA). Residue Ser270 is modified to Phosphoserine. A coiled-coil region spans residues 358–1454 (KDVLQAAAAQ…TITVHESLSS (1097 aa)). Residues Ser381, Ser385, and Ser461 each carry the phosphoserine modification. A compositionally biased stretch (basic and acidic residues) spans 785-796 (KEELDRGARRLE). Residues 785–804 (KEELDRGARRLEEDTEETSG) form a disordered region. A Phosphoserine modification is found at Ser979. A compositionally biased stretch (basic and acidic residues) spans 1372–1382 (RGAAKKKEPKG). Disordered regions lie at residues 1372–1396 (RGAA…IKIP) and 1458–1487 (VEAA…GLGQ). Ser1387 is subject to Phosphoserine. Residues 1462–1474 (PAEHAHPRGDTKL) show a composition bias toward basic and acidic residues. A Phosphoserine modification is found at Ser1479.

Homodimer. Interacts with GOLGA7. Interacts with GOPC. Cleaved by caspases in apoptotic cells. As to expression, highly expressed in testis. Transcripts can be found in spermatids during spermatogenesis. No expression in Leydig cells, spermatogonia or spermatocytes. Detected at low levels in all tissues.

The protein resides in the cytoplasm. Its subcellular location is the golgi apparatus. The protein localises to the golgi stack membrane. Functionally, plays an important role in spermatogenesis and/or testis development. Probably identical with the serologically detectable male antigen (SDM). Probably involved in maintaining Golgi structure. In Mus musculus (Mouse), this protein is Golgin subfamily A member 3 (Golga3).